A 473-amino-acid polypeptide reads, in one-letter code: Photosystem II CP43 reaction center protein (473 aa).

Positions 1 to 14 (MKTLYSLRRFYPVE) are excised as a propeptide. Residue threonine 15 is modified to N-acetylthreonine. A Phosphothreonine modification is found at threonine 15. A run of 5 helical transmembrane segments spans residues 69–93 (LFEVAHFVPEKPMYEQGLILLPHLA), 134–155 (LLGPETLEESFPFFGYVWKDRN), 178–200 (KALYFGGVYDTWAPGGGDVRKIT), 255–275 (KPFAWARRALVWSGEAYLSYS), and 291–312 (WFNNTAYPSEFYGPTGPEASQA). Glutamate 367 provides a ligand contact to [CaMn4O5] cluster. A helical transmembrane segment spans residues 447–471 (RARAAAAGFEKGIDRDFEPVLSMTP).

It belongs to the PsbB/PsbC family. PsbC subfamily. As to quaternary structure, PSII is composed of 1 copy each of membrane proteins PsbA, PsbB, PsbC, PsbD, PsbE, PsbF, PsbH, PsbI, PsbJ, PsbK, PsbL, PsbM, PsbT, PsbX, PsbY, PsbZ, Psb30/Ycf12, at least 3 peripheral proteins of the oxygen-evolving complex and a large number of cofactors. It forms dimeric complexes. It depends on Binds multiple chlorophylls and provides some of the ligands for the Ca-4Mn-5O cluster of the oxygen-evolving complex. It may also provide a ligand for a Cl- that is required for oxygen evolution. PSII binds additional chlorophylls, carotenoids and specific lipids. as a cofactor.

Its subcellular location is the plastid. The protein localises to the chloroplast thylakoid membrane. In terms of biological role, one of the components of the core complex of photosystem II (PSII). It binds chlorophyll and helps catalyze the primary light-induced photochemical processes of PSII. PSII is a light-driven water:plastoquinone oxidoreductase, using light energy to abstract electrons from H(2)O, generating O(2) and a proton gradient subsequently used for ATP formation. This Eucalyptus globulus subsp. globulus (Tasmanian blue gum) protein is Photosystem II CP43 reaction center protein.